Here is a 398-residue protein sequence, read N- to C-terminus: Phosphoglycerate kinase (398 aa).

Residues 23–25 (DLN), R38, 61–64 (HFGR), R119, and R152 each bind substrate. Residues K202, E324, and 354–357 (GGDT) each bind ATP.

Belongs to the phosphoglycerate kinase family. In terms of assembly, monomer.

The protein resides in the cytoplasm. It catalyses the reaction (2R)-3-phosphoglycerate + ATP = (2R)-3-phospho-glyceroyl phosphate + ADP. It functions in the pathway carbohydrate degradation; glycolysis; pyruvate from D-glyceraldehyde 3-phosphate: step 2/5. This chain is Phosphoglycerate kinase, found in Rhodopseudomonas palustris (strain ATCC BAA-98 / CGA009).